Consider the following 433-residue polypeptide: Phosphomethylpyrimidine synthase (433 aa).

Substrate-binding positions include N68, M97, Y126, H162, 184–186 (SRG), 225–228 (DALR), and E264. A Zn(2+)-binding site is contributed by H268. Position 291 (Y291) interacts with substrate. H332 serves as a coordination point for Zn(2+). [4Fe-4S] cluster-binding residues include C408, C411, and C415.

Belongs to the ThiC family. The cofactor is [4Fe-4S] cluster.

The enzyme catalyses 5-amino-1-(5-phospho-beta-D-ribosyl)imidazole + S-adenosyl-L-methionine = 4-amino-2-methyl-5-(phosphooxymethyl)pyrimidine + CO + 5'-deoxyadenosine + formate + L-methionine + 3 H(+). The protein operates within cofactor biosynthesis; thiamine diphosphate biosynthesis. In terms of biological role, catalyzes the synthesis of the hydroxymethylpyrimidine phosphate (HMP-P) moiety of thiamine from aminoimidazole ribotide (AIR) in a radical S-adenosyl-L-methionine (SAM)-dependent reaction. In Fusobacterium nucleatum subsp. nucleatum (strain ATCC 25586 / DSM 15643 / BCRC 10681 / CIP 101130 / JCM 8532 / KCTC 2640 / LMG 13131 / VPI 4355), this protein is Phosphomethylpyrimidine synthase.